The primary structure comprises 288 residues: MALRSVSRRLGSRILNQRSFVASLHSHATSFGFQEVKEEEKSKLVGNVFTNVASSYDIMNDVMSGGLHRLWKERLVGKLSPFAGMKHLDVAGGTGDVAFRIYDAVYSVKRRALQKVDEASLEETQIYVCDINPNMLNVGKQRAAERGLRDNKSLVWVEGDAEALSFDDNSMDGYTIAFGIRNVTHIEKALAEAYRVLKRGGRFLCLELSHVEIPVFKNLYDLYSFQVIPNLGELIAGDRESYQYLVESVRRFPPQERFASMIADAGFEKVEYENLVGGVVAIHSAIKL.

The N-terminal 27 residues, 1 to 27, are a transit peptide targeting the mitochondrion; it reads MALRSVSRRLGSRILNQRSFVASLHSH. S-adenosyl-L-methionine contacts are provided by residues threonine 94, aspartate 130, and 160–161; that span reads DA.

This sequence belongs to the class I-like SAM-binding methyltransferase superfamily. MenG/UbiE family. Component of a multi-subunit COQ enzyme complex.

It is found in the mitochondrion inner membrane. It carries out the reaction a 2-methoxy-6-(all-trans-polyprenyl)benzene-1,4-diol + S-adenosyl-L-methionine = a 5-methoxy-2-methyl-3-(all-trans-polyprenyl)benzene-1,4-diol + S-adenosyl-L-homocysteine + H(+). It participates in cofactor biosynthesis; ubiquinone biosynthesis. In terms of biological role, methyltransferase required for the conversion of 2-polyprenyl-6-methoxy-1,4-benzoquinol (DDMQH2) to 2-polyprenyl-3-methyl-6-methoxy-1,4-benzoquinol (DMQH2). The chain is 2-methoxy-6-polyprenyl-1,4-benzoquinol methylase, mitochondrial from Arabidopsis thaliana (Mouse-ear cress).